Reading from the N-terminus, the 69-residue chain is MKKGIHPEMKLITVKCACGAEHKFYSAKENVRIDVCSSCHPFYKGAGAAGMIVDTEGRIEKFKKKYNLD.

C16, C18, C36, and C39 together coordinate Zn(2+).

Belongs to the bacterial ribosomal protein bL31 family. Type A subfamily. As to quaternary structure, part of the 50S ribosomal subunit. It depends on Zn(2+) as a cofactor.

In terms of biological role, binds the 23S rRNA. This chain is Large ribosomal subunit protein bL31, found in Thermosipho africanus (strain TCF52B).